The primary structure comprises 146 residues: Large ribosomal subunit protein uL15 (146 aa).

Residues 1 to 51 (MQLNTLKPAEGSKKNRRRVGRGIGSGLGKTAGRGHKGQKSRSGGFHKVGFE) form a disordered region. Residues 21-31 (RGIGSGLGKTA) are compositionally biased toward gly residues.

The protein belongs to the universal ribosomal protein uL15 family. In terms of assembly, part of the 50S ribosomal subunit.

In terms of biological role, binds to the 23S rRNA. This chain is Large ribosomal subunit protein uL15, found in Polynucleobacter asymbioticus (strain DSM 18221 / CIP 109841 / QLW-P1DMWA-1) (Polynucleobacter necessarius subsp. asymbioticus).